Reading from the N-terminus, the 98-residue chain is Co-chaperonin GroES (98 aa).

This sequence belongs to the GroES chaperonin family. Heptamer of 7 subunits arranged in a ring. Interacts with the chaperonin GroEL.

Its subcellular location is the cytoplasm. Together with the chaperonin GroEL, plays an essential role in assisting protein folding. The GroEL-GroES system forms a nano-cage that allows encapsulation of the non-native substrate proteins and provides a physical environment optimized to promote and accelerate protein folding. GroES binds to the apical surface of the GroEL ring, thereby capping the opening of the GroEL channel. The chain is Co-chaperonin GroES from Kineococcus radiotolerans (strain ATCC BAA-149 / DSM 14245 / SRS30216).